The chain runs to 314 residues: Acetyl-coenzyme A carboxylase carboxyl transferase subunit alpha (314 aa).

Positions 32–289 (EIDMLEASLE…KSAFVAQLDS (258 aa)) constitute a CoA carboxyltransferase C-terminal domain.

This sequence belongs to the AccA family. In terms of assembly, acetyl-CoA carboxylase is a heterohexamer composed of biotin carboxyl carrier protein (AccB), biotin carboxylase (AccC) and two subunits each of ACCase subunit alpha (AccA) and ACCase subunit beta (AccD).

The protein resides in the cytoplasm. The enzyme catalyses N(6)-carboxybiotinyl-L-lysyl-[protein] + acetyl-CoA = N(6)-biotinyl-L-lysyl-[protein] + malonyl-CoA. It functions in the pathway lipid metabolism; malonyl-CoA biosynthesis; malonyl-CoA from acetyl-CoA: step 1/1. Component of the acetyl coenzyme A carboxylase (ACC) complex. First, biotin carboxylase catalyzes the carboxylation of biotin on its carrier protein (BCCP) and then the CO(2) group is transferred by the carboxyltransferase to acetyl-CoA to form malonyl-CoA. The chain is Acetyl-coenzyme A carboxylase carboxyl transferase subunit alpha from Staphylococcus aureus (strain NCTC 8325 / PS 47).